A 64-amino-acid chain; its full sequence is UPF0434 protein TERTU_2813 (64 aa).

The protein belongs to the UPF0434 family.

The chain is UPF0434 protein TERTU_2813 from Teredinibacter turnerae (strain ATCC 39867 / T7901).